The chain runs to 364 residues: UDP-N-acetylenolpyruvoylglucosamine reductase (364 aa).

One can recognise an FAD-binding PCMH-type domain in the interval 30-196 (LGGPATRLIT…LRVRFELEDA (167 aa)). Arginine 173 is an active-site residue. Serine 252 (proton donor) is an active-site residue. Glutamate 356 is an active-site residue.

It belongs to the MurB family. FAD serves as cofactor.

It is found in the cytoplasm. It catalyses the reaction UDP-N-acetyl-alpha-D-muramate + NADP(+) = UDP-N-acetyl-3-O-(1-carboxyvinyl)-alpha-D-glucosamine + NADPH + H(+). The protein operates within cell wall biogenesis; peptidoglycan biosynthesis. Its function is as follows. Cell wall formation. The chain is UDP-N-acetylenolpyruvoylglucosamine reductase from Streptomyces avermitilis (strain ATCC 31267 / DSM 46492 / JCM 5070 / NBRC 14893 / NCIMB 12804 / NRRL 8165 / MA-4680).